Consider the following 493-residue polypeptide: D-aminoacyl-tRNA deacylase (493 aa).

Basic and acidic residues predominate over residues 22–37 (DLGDWERRDDPSRPDA). Disordered stretches follow at residues 22-44 (DLGDWERRDDPSRPDADGGGTYY) and 441-493 (PEGP…EPSE).

This sequence belongs to the DtdA deacylase family. As to quaternary structure, monomer. It depends on Zn(2+) as a cofactor.

The catalysed reaction is a D-aminoacyl-tRNA + H2O = a tRNA + a D-alpha-amino acid + H(+). The enzyme catalyses glycyl-tRNA(Ala) + H2O = tRNA(Ala) + glycine + H(+). D-aminoacyl-tRNA deacylase with broad substrate specificity. By recycling D-aminoacyl-tRNA to D-amino acids and free tRNA molecules, this enzyme counteracts the toxicity associated with the formation of D-aminoacyl-tRNA entities in vivo. The polypeptide is D-aminoacyl-tRNA deacylase (Halorubrum lacusprofundi (strain ATCC 49239 / DSM 5036 / JCM 8891 / ACAM 34)).